Consider the following 150-residue polypeptide: Large ribosomal subunit protein uL15 (150 aa).

Residues 1 to 55 (MADNEILQMHDLKPAPGAKKDRTRVGRGEGSKGKTAGRGAKGQTKRNHVRPGFEG) are disordered. A compositionally biased stretch (basic and acidic residues) spans 8–32 (QMHDLKPAPGAKKDRTRVGRGEGSK).

Belongs to the universal ribosomal protein uL15 family. In terms of assembly, part of the 50S ribosomal subunit.

In terms of biological role, binds to the 23S rRNA. This chain is Large ribosomal subunit protein uL15, found in Bifidobacterium longum (strain DJO10A).